The sequence spans 473 residues: Protein nucleotidyltransferase YdiU (473 aa).

Residues Gly79, Gly81, Arg82, Lys102, Asp114, Gly115, Arg165, and Arg172 each contribute to the ATP site. Residue Asp241 is the Proton acceptor of the active site. The Mg(2+) site is built by Asn242 and Asp251. Asp251 is a binding site for ATP.

Belongs to the SELO family. It depends on Mg(2+) as a cofactor. Requires Mn(2+) as cofactor.

It catalyses the reaction L-seryl-[protein] + ATP = 3-O-(5'-adenylyl)-L-seryl-[protein] + diphosphate. It carries out the reaction L-threonyl-[protein] + ATP = 3-O-(5'-adenylyl)-L-threonyl-[protein] + diphosphate. The enzyme catalyses L-tyrosyl-[protein] + ATP = O-(5'-adenylyl)-L-tyrosyl-[protein] + diphosphate. The catalysed reaction is L-histidyl-[protein] + UTP = N(tele)-(5'-uridylyl)-L-histidyl-[protein] + diphosphate. It catalyses the reaction L-seryl-[protein] + UTP = O-(5'-uridylyl)-L-seryl-[protein] + diphosphate. It carries out the reaction L-tyrosyl-[protein] + UTP = O-(5'-uridylyl)-L-tyrosyl-[protein] + diphosphate. Functionally, nucleotidyltransferase involved in the post-translational modification of proteins. It can catalyze the addition of adenosine monophosphate (AMP) or uridine monophosphate (UMP) to a protein, resulting in modifications known as AMPylation and UMPylation. The sequence is that of Protein nucleotidyltransferase YdiU from Marinomonas sp. (strain MWYL1).